A 144-amino-acid chain; its full sequence is DNA polymerase III subunit chi (144 aa).

This sequence belongs to the DNA polymerase III chi/HolC chain family. DNA polymerase III contains a core (composed of alpha, epsilon and theta chains) that associates with a tau subunit. This core dimerizes to form the POLIII' complex. PolIII' associates with the gamma complex (composed of gamma, delta, delta', psi and chi chains) and with the beta chain to form the complete DNA polymerase III complex. Interacts directly with the psi subunit (holD). The only subunit of the DNA polymerase III holoenzyme known to interact with single-stranded DNA binding protein (SSB), interacts directly with DNA helicase YoaA.

The catalysed reaction is DNA(n) + a 2'-deoxyribonucleoside 5'-triphosphate = DNA(n+1) + diphosphate. Its function is as follows. Part of the beta sliding clamp loading complex, which hydrolyzes ATP to load the beta clamp onto primed DNA to form the DNA replication pre-initiation complex. DNA polymerase III is a complex, multichain enzyme responsible for most of the replicative synthesis in bacteria. This DNA polymerase also exhibits 3' to 5' exonuclease activity. This subunit may stabilize YoaA and/or stimulate the helicase activity of YoaA. The polypeptide is DNA polymerase III subunit chi (holC) (Haemophilus influenzae (strain ATCC 51907 / DSM 11121 / KW20 / Rd)).